The primary structure comprises 334 residues: Glycerol-3-phosphate dehydrogenase [NAD(P)+] (334 aa).

NADPH contacts are provided by W13, R33, and K106. K106, G137, and S139 together coordinate sn-glycerol 3-phosphate. Residue A141 participates in NADPH binding. Sn-glycerol 3-phosphate is bound by residues K192, D245, S255, R256, and N257. The active-site Proton acceptor is K192. An NADPH-binding site is contributed by R256. NADPH is bound by residues V280 and E282.

The protein belongs to the NAD-dependent glycerol-3-phosphate dehydrogenase family.

Its subcellular location is the cytoplasm. The catalysed reaction is sn-glycerol 3-phosphate + NAD(+) = dihydroxyacetone phosphate + NADH + H(+). The enzyme catalyses sn-glycerol 3-phosphate + NADP(+) = dihydroxyacetone phosphate + NADPH + H(+). It participates in membrane lipid metabolism; glycerophospholipid metabolism. Its function is as follows. Catalyzes the reduction of the glycolytic intermediate dihydroxyacetone phosphate (DHAP) to sn-glycerol 3-phosphate (G3P), the key precursor for phospholipid synthesis. This Chlamydia trachomatis serovar L2 (strain ATCC VR-902B / DSM 19102 / 434/Bu) protein is Glycerol-3-phosphate dehydrogenase [NAD(P)+].